The primary structure comprises 151 residues: UPF0102 protein Ava_4800 (151 aa).

This sequence belongs to the UPF0102 family.

The protein is UPF0102 protein Ava_4800 of Trichormus variabilis (strain ATCC 29413 / PCC 7937) (Anabaena variabilis).